Here is a 637-residue protein sequence, read N- to C-terminus: DNA damage-binding protein CMR1 (637 aa).

2 disordered regions span residues 1 to 91 and 144 to 168; these read MIES…EEEA and LVDT…TERR. 2 stretches are compositionally biased toward basic and acidic residues: residues 8–23 and 74–91; these read EQER…RLMK and AGHE…EEEA. WD repeat units follow at residues 185–226, 255–295, 297–321, 361–401, and 431–470; these read VTPK…FASN, HARS…SEEI, AGEE…VYMD, VCEK…SVVK, and KARQ…LFSE. Disordered stretches follow at residues 482 to 508 and 525 to 549; these read SNKP…LSWL and KQEQ…PTRI. 2 WD repeats span residues 556–598 and 602–637; these read GKWL…LRSL and NLVT…SPDP.

This sequence belongs to the WD repeat DDB2/WDR76 family.

Its function is as follows. DNA-binding protein that binds to both single- and double-stranded DNA. Binds preferentially to UV-damaged DNA. May be involved in DNA-metabolic processes. This Mycosarcoma maydis (Corn smut fungus) protein is DNA damage-binding protein CMR1.